The following is a 403-amino-acid chain: Serine/threonine transporter SstT (403 aa).

10 consecutive transmembrane segments (helical) span residues 15-35 (LGLI…AIVW), 49-69 (FISA…MTAI), 85-105 (LLYV…SFIF), 142-162 (ALLN…GMML), 183-203 (IVQL…AGTL), 218-238 (LAVI…LIVF), 246-268 (YPLV…SSAA), 289-309 (ISIP…ISVI), 317-337 (LGIG…SLAA), and 362-382 (PDVA…QDAT).

The protein belongs to the dicarboxylate/amino acid:cation symporter (DAACS) (TC 2.A.23) family.

Its subcellular location is the cell inner membrane. The enzyme catalyses L-serine(in) + Na(+)(in) = L-serine(out) + Na(+)(out). The catalysed reaction is L-threonine(in) + Na(+)(in) = L-threonine(out) + Na(+)(out). Involved in the import of serine and threonine into the cell, with the concomitant import of sodium (symport system). The chain is Serine/threonine transporter SstT from Chromohalobacter salexigens (strain ATCC BAA-138 / DSM 3043 / CIP 106854 / NCIMB 13768 / 1H11).